Consider the following 245-residue polypeptide: MNASATVAGVDLPDGQPARVLHARPEPLRMKPGETALVVVDMQNAYASLGGYLDLAGFDVSSTGPVIVNINKACAAARAAGIPVIFFQNGWDPAYVEAGGPGSPNWHKSNALKTMRKRPELEGQLLAKGGWDYQLVDELKPQPGDIVVPKIRYSGFFNSSFDSVLRSRGIRNLVFTGIATNVCVESTLRDGFHLEYFGVVLADATHQAGPDFAQQAALFNIETFFGWISSVDDFCTTFSPVGQPS.

Residue aspartate 41 is the Proton acceptor of the active site. The active site involves lysine 150. Catalysis depends on cysteine 183, which acts as the Nucleophile.

It belongs to the isochorismatase family. RutB subfamily.

It carries out the reaction (Z)-3-ureidoacrylate + H2O + H(+) = (Z)-3-aminoacrylate + NH4(+) + CO2. The enzyme catalyses (Z)-3-ureidoacrylate + H2O = (Z)-3-aminoacrylate + carbamate + H(+). It catalyses the reaction (Z)-2-methylureidoacrylate + H2O + H(+) = (Z)-2-methylaminoacrylate + NH4(+) + CO2. Its function is as follows. Hydrolyzes ureidoacrylate to form aminoacrylate and carbamate. The carbamate hydrolyzes spontaneously, thereby releasing one of the nitrogen atoms of the pyrimidine ring as ammonia and one of its carbon atoms as CO2. The sequence is that of Ureidoacrylate amidohydrolase RutB from Pseudomonas savastanoi pv. phaseolicola (strain 1448A / Race 6) (Pseudomonas syringae pv. phaseolicola (strain 1448A / Race 6)).